We begin with the raw amino-acid sequence, 151 residues long: Tetratricopeptide repeat protein 32 (151 aa).

TPR repeat units lie at residues 8-41, 58-91, and 92-125; these read SHATLTLAQAHFNNGEYAEAEALYSAYIRRCACA, ATAYNNRGQIKYFRVDFYEAMDDYTSAIEVQPNF, and EVPYYNRGLILYRLGYFDDALEDFKKVLDLNPGF.

The chain is Tetratricopeptide repeat protein 32 (TTC32) from Homo sapiens (Human).